The sequence spans 288 residues: NAD kinase (288 aa).

Aspartate 73 acts as the Proton acceptor in catalysis. Residues 73–74 (DG), arginine 78, 144–145 (NE), aspartate 174, 185–190 (TAYSLS), and alanine 209 contribute to the NAD(+) site.

Belongs to the NAD kinase family. The cofactor is a divalent metal cation.

It is found in the cytoplasm. It carries out the reaction NAD(+) + ATP = ADP + NADP(+) + H(+). Involved in the regulation of the intracellular balance of NAD and NADP, and is a key enzyme in the biosynthesis of NADP. Catalyzes specifically the phosphorylation on 2'-hydroxyl of the adenosine moiety of NAD to yield NADP. This is NAD kinase from Porphyromonas gingivalis (strain ATCC BAA-308 / W83).